Reading from the N-terminus, the 430-residue chain is tRNA(Ile)-lysidine synthase (430 aa).

An ATP-binding site is contributed by 21 to 26 (SGGLDS).

This sequence belongs to the tRNA(Ile)-lysidine synthase family.

The protein localises to the cytoplasm. It catalyses the reaction cytidine(34) in tRNA(Ile2) + L-lysine + ATP = lysidine(34) in tRNA(Ile2) + AMP + diphosphate + H(+). Functionally, ligates lysine onto the cytidine present at position 34 of the AUA codon-specific tRNA(Ile) that contains the anticodon CAU, in an ATP-dependent manner. Cytidine is converted to lysidine, thus changing the amino acid specificity of the tRNA from methionine to isoleucine. The protein is tRNA(Ile)-lysidine synthase of Salmonella typhimurium (strain LT2 / SGSC1412 / ATCC 700720).